We begin with the raw amino-acid sequence, 202 residues long: LexA repressor (202 aa).

Residues 28-48 (RAEIAQQLGFRSPNAAEEHLK) constitute a DNA-binding region (H-T-H motif). Active-site for autocatalytic cleavage activity residues include S119 and K156.

The protein belongs to the peptidase S24 family. In terms of assembly, homodimer.

It carries out the reaction Hydrolysis of Ala-|-Gly bond in repressor LexA.. In terms of biological role, represses a number of genes involved in the response to DNA damage (SOS response), including recA and lexA. Binds to the 16 bp palindromic sequence 5'-CTGTATATATATACAG-3'. In the presence of single-stranded DNA, RecA interacts with LexA causing an autocatalytic cleavage which disrupts the DNA-binding part of LexA, leading to derepression of the SOS regulon and eventually DNA repair. The protein is LexA repressor of Pectobacterium carotovorum subsp. carotovorum (strain PC1).